The chain runs to 558 residues: DEAD-box ATP-dependent RNA helicase 49 (558 aa).

The Q motif motif lies at 16 to 44 (FSELKPPLSEDIIEALDRSGFEVCTPVQA). Residues 47 to 226 (IPFLCSHKDV…KAGLRNAMEV (180 aa)) form the Helicase ATP-binding domain. 60–67 (AATGSGKT) is an ATP binding site. A DEAD box motif is present at residues 174 to 177 (DEAD). Positions 255–402 (QLVHLLIENK…ERKCSENASD (148 aa)) constitute a Helicase C-terminal domain. Residues 506–558 (KDKLQQEKRGKRKKSSKEAVDDSNKASRKRKLTGRQRQTIQTAQDEEEMNLRL) are disordered. Positions 521–530 (SKEAVDDSNK) are enriched in basic and acidic residues. Acidic residues predominate over residues 549 to 558 (QDEEEMNLRL).

This sequence belongs to the DEAD box helicase family. DDX55/SPB4 subfamily.

It carries out the reaction ATP + H2O = ADP + phosphate + H(+). The chain is DEAD-box ATP-dependent RNA helicase 49 (RH49) from Arabidopsis thaliana (Mouse-ear cress).